We begin with the raw amino-acid sequence, 97 residues long: MQAVEFCENPQGIRLRIFLQPKASRDQIVGLHDNELKIAITAPPIDGQANAHLLKYLSKLFKVPKSSIVLEKGELQRHKQIFVPEPKLIPKEIEVLG.

This sequence belongs to the UPF0235 family.

In Glaesserella parasuis serovar 5 (strain SH0165) (Haemophilus parasuis), this protein is UPF0235 protein HAPS_1504.